The sequence spans 193 residues: Ion-translocating oxidoreductase complex subunit A (193 aa).

The next 6 helical transmembrane spans lie at 5 to 25 (ALLFVSILLVNNFVLVKFLGL), 39 to 59 (IGMGMATTFVMTLGSMFSWLI), 62 to 82 (FILVPLDILYLRTMAFILVLA), 102 to 122 (LLGIFLPLITTNCAVLGVVLL), 134 to 154 (TIYGFGGAAGFSLVMVLFAAI), and 171 to 191 (SIALITAGLMSLAFMGFTGLV).

This sequence belongs to the NqrDE/RnfAE family. The complex is composed of six subunits: RnfA, RnfB, RnfC, RnfD, RnfE and RnfG.

The protein resides in the cell inner membrane. In terms of biological role, part of a membrane-bound complex that couples electron transfer with translocation of ions across the membrane. This chain is Ion-translocating oxidoreductase complex subunit A, found in Pectobacterium atrosepticum (strain SCRI 1043 / ATCC BAA-672) (Erwinia carotovora subsp. atroseptica).